A 429-amino-acid chain; its full sequence is Adenylosuccinate synthetase (429 aa).

GTP contacts are provided by residues 12-18 and 40-42; these read GDEGKGK and GHT. The Proton acceptor role is filled by Asp-13. Asp-13 and Gly-40 together coordinate Mg(2+). Residues 13-16, 38-41, Thr-128, Arg-142, Gln-223, Thr-238, and Arg-302 each bind IMP; these read DEGK and NAGH. His-41 functions as the Proton donor in the catalytic mechanism. Residue 298-304 coordinates substrate; sequence VNTGRKR. Residues Arg-304, 330-332, and 412-414 each bind GTP; these read KLD and GVG.

This sequence belongs to the adenylosuccinate synthetase family. Homodimer. It depends on Mg(2+) as a cofactor.

The protein resides in the cytoplasm. The catalysed reaction is IMP + L-aspartate + GTP = N(6)-(1,2-dicarboxyethyl)-AMP + GDP + phosphate + 2 H(+). Its pathway is purine metabolism; AMP biosynthesis via de novo pathway; AMP from IMP: step 1/2. Functionally, plays an important role in the de novo pathway of purine nucleotide biosynthesis. Catalyzes the first committed step in the biosynthesis of AMP from IMP. This is Adenylosuccinate synthetase from Corynebacterium jeikeium (strain K411).